We begin with the raw amino-acid sequence, 466 residues long: Alpha-1A adrenergic receptor (466 aa).

At 1-27 the chain is on the extracellular side; the sequence is MVFLSGNASDSSNCTHPPPPVNISKAI. N-linked (GlcNAc...) asparagine glycans are attached at residues Asn7, Asn13, and Asn22. The helical transmembrane segment at 28 to 51 threads the bilayer; sequence LLGVILGGLILFGVLGNILVILSV. Topologically, residues 52-64 are cytoplasmic; that stretch reads ACHRHLHSVTHYY. Residues 65–88 form a helical membrane-spanning segment; sequence IVNLAVADLLLTSTVLPFSAIFEI. Topologically, residues 89 to 99 are extracellular; it reads LGYWAFGRVFC. Cys99 and Cys176 form a disulfide bridge. The chain crosses the membrane as a helical span at residues 100 to 122; that stretch reads NVWAAVDVLCCTASIMGLCIISI. Residues 123-143 are Cytoplasmic-facing; sequence DRYIGVSYPLRYPTIVTQKRG. A helical transmembrane segment spans residues 144 to 167; sequence LMALLCVWALSLVISIGPLFGWRQ. Topologically, residues 168–181 are extracellular; it reads PAPEDETICQINEE. Residues 182–205 form a helical membrane-spanning segment; the sequence is PGYVLFSALGSFYVPLTIILVMYC. Over 206–273 the chain is Cytoplasmic; the sequence is RVYVVAKRES…FSREKKAAKT (68 aa). A Phosphoserine; by PKA modification is found at Ser215. A helical transmembrane segment spans residues 274–297; sequence LGIVVGCFVLCWLPFFLVMPIGSF. Topologically, residues 298–305 are extracellular; the sequence is FPDFRPSE. The helical transmembrane segment at 306-329 threads the bilayer; it reads TVFKIAFWLGYLNSCINPIIYPCS. Topologically, residues 330–466 are cytoplasmic; that stretch reads SQEFKKAFQN…ISLSENGEEV (137 aa). A Nuclear localization signal motif is present at residues 334-349; the sequence is KKAFQNVLRIQCLRRK. The S-palmitoyl cysteine moiety is linked to residue Cys345.

It belongs to the G-protein coupled receptor 1 family. Adrenergic receptor subfamily. ADRA1A sub-subfamily. As to quaternary structure, homo- and heterooligomer. Heterooligomerizes with ADRA1B homooligomers in cardiac myocytes. Interacts with CAVIN4.

It is found in the nucleus membrane. Its subcellular location is the cell membrane. The protein localises to the cytoplasm. The protein resides in the membrane. It localises to the caveola. Its function is as follows. This alpha-adrenergic receptor mediates its action by association with G proteins that activate a phosphatidylinositol-calcium second messenger system. Its effect is mediated by G(q) and G(11) proteins. Nuclear ADRA1A-ADRA1B heterooligomers regulate phenylephrine (PE)-stimulated ERK signaling in cardiac myocytes. The polypeptide is Alpha-1A adrenergic receptor (ADRA1A) (Bos taurus (Bovine)).